The primary structure comprises 80 residues: Acyl carrier protein (80 aa).

The Carrier domain maps to 4–79 (NSIEEKVRSI…DVVAYIEKVQ (76 aa)). Ser39 carries the post-translational modification O-(pantetheine 4'-phosphoryl)serine.

It belongs to the acyl carrier protein (ACP) family. Post-translationally, 4'-phosphopantetheine is transferred from CoA to a specific serine of apo-ACP by AcpS. This modification is essential for activity because fatty acids are bound in thioester linkage to the sulfhydryl of the prosthetic group.

The protein resides in the cytoplasm. The protein operates within lipid metabolism; fatty acid biosynthesis. Functionally, carrier of the growing fatty acid chain in fatty acid biosynthesis. This Akkermansia muciniphila (strain ATCC BAA-835 / DSM 22959 / JCM 33894 / BCRC 81048 / CCUG 64013 / CIP 107961 / Muc) protein is Acyl carrier protein.